A 74-amino-acid chain; its full sequence is Imcroporin (74 aa).

The first 22 residues, 1 to 22 (MKFQYLLAVFLIVLVVTDHCQA), serve as a signal peptide directing secretion. K39 carries the lysine amide; partial modification. Residues 45 to 74 (QLEARFEPKQRNFRKRELDFEKLFANMPDY) constitute a propeptide that is removed on maturation.

It belongs to the non-disulfide-bridged peptide (NDBP) superfamily. Short antimicrobial peptide (group 4) family. In terms of tissue distribution, expressed by the venom gland.

The protein localises to the secreted. Its subcellular location is the target cell membrane. Has potent antibacterial activity against Gram-positive bacteria M.luteus, B.thuringiensis, S.aureus and B.subtilis, but not Gram-negative bacteria. Shows a weak cytotoxicity effect against mammalian cell lines and relatively low hemolytic activity against human erythrocytes. In Isometrus maculatus (Lesser brown scorpion), this protein is Imcroporin.